A 321-amino-acid chain; its full sequence is UPF0676 protein C1494.01 (321 aa).

The Fe2OG dioxygenase domain maps to 159 to 267 (EEDVLRLLKY…RQTIAYFVTP (109 aa)).

It belongs to the UPF0676 family.

The protein localises to the cytoplasm. It is found in the nucleus. In Schizosaccharomyces pombe (strain 972 / ATCC 24843) (Fission yeast), this protein is UPF0676 protein C1494.01.